The sequence spans 385 residues: 1-deoxy-D-xylulose 5-phosphate reductoisomerase (385 aa).

Positions 10, 11, 12, 13, 37, and 124 each coordinate NADPH. Lys-125 lines the 1-deoxy-D-xylulose 5-phosphate pocket. Glu-126 is an NADPH binding site. A Mn(2+)-binding site is contributed by Asp-150. 1-deoxy-D-xylulose 5-phosphate-binding residues include Ser-151, Glu-152, Ser-176, and His-199. Residue Glu-152 coordinates Mn(2+). An NADPH-binding site is contributed by Gly-205. Positions 212, 217, 218, and 221 each coordinate 1-deoxy-D-xylulose 5-phosphate. Glu-221 lines the Mn(2+) pocket.

This sequence belongs to the DXR family. Requires Mg(2+) as cofactor. The cofactor is Mn(2+).

The catalysed reaction is 2-C-methyl-D-erythritol 4-phosphate + NADP(+) = 1-deoxy-D-xylulose 5-phosphate + NADPH + H(+). It functions in the pathway isoprenoid biosynthesis; isopentenyl diphosphate biosynthesis via DXP pathway; isopentenyl diphosphate from 1-deoxy-D-xylulose 5-phosphate: step 1/6. Its function is as follows. Catalyzes the NADPH-dependent rearrangement and reduction of 1-deoxy-D-xylulose-5-phosphate (DXP) to 2-C-methyl-D-erythritol 4-phosphate (MEP). The protein is 1-deoxy-D-xylulose 5-phosphate reductoisomerase of Clostridium botulinum (strain Okra / Type B1).